A 341-amino-acid chain; its full sequence is L-threonine 3-dehydrogenase (341 aa).

Cysteine 38 is a binding site for Zn(2+). Catalysis depends on charge relay system residues threonine 40 and histidine 43. The Zn(2+) site is built by histidine 63, glutamate 64, cysteine 93, cysteine 96, cysteine 99, and cysteine 107. Residues isoleucine 175, aspartate 195, arginine 200, 262–264 (LGI), and 286–287 (IY) each bind NAD(+).

It belongs to the zinc-containing alcohol dehydrogenase family. Homotetramer. It depends on Zn(2+) as a cofactor.

The protein resides in the cytoplasm. The enzyme catalyses L-threonine + NAD(+) = (2S)-2-amino-3-oxobutanoate + NADH + H(+). The protein operates within amino-acid degradation; L-threonine degradation via oxydo-reductase pathway; glycine from L-threonine: step 1/2. Catalyzes the NAD(+)-dependent oxidation of L-threonine to 2-amino-3-ketobutyrate. The protein is L-threonine 3-dehydrogenase of Escherichia coli O139:H28 (strain E24377A / ETEC).